A 324-amino-acid polypeptide reads, in one-letter code: Endochitinase A2 (324 aa).

Positions 1 to 20 (MSKLRIPILLVLFIVSCCSA) are cleaved as a signal peptide. The Chitin-binding type-1 domain maps to 21–61 (EQCGTQAGGALCPGGLCCSKFGWCGSTSEYCGDGCQSQCSG). 4 disulfides stabilise this stretch: cysteine 23-cysteine 38, cysteine 32-cysteine 44, cysteine 37-cysteine 51, and cysteine 55-cysteine 59. Catalysis depends on glutamate 133, which acts as the Proton donor. 2 disulfides stabilise this stretch: cysteine 151/cysteine 170 and cysteine 269/cysteine 301. A propeptide spans 310 to 324 (SLPLSSILLDTVAAA) (removed in mature form).

This sequence belongs to the glycosyl hydrolase 19 family. Chitinase class I subfamily.

The catalysed reaction is Random endo-hydrolysis of N-acetyl-beta-D-glucosaminide (1-&gt;4)-beta-linkages in chitin and chitodextrins.. Its function is as follows. Defense against chitin-containing fungal pathogens. This chain is Endochitinase A2 (CHI2), found in Pisum sativum (Garden pea).